A 189-amino-acid polypeptide reads, in one-letter code: dCTP deaminase (189 aa).

Residues Lys112–Arg117, Thr136–Glu138, Gln157, Tyr171, and Gln181 contribute to the dCTP site. The active-site Proton donor/acceptor is the Glu138.

The protein belongs to the dCTP deaminase family. As to quaternary structure, homotrimer.

It carries out the reaction dCTP + H2O + H(+) = dUTP + NH4(+). Its pathway is pyrimidine metabolism; dUMP biosynthesis; dUMP from dCTP (dUTP route): step 1/2. In terms of biological role, catalyzes the deamination of dCTP to dUTP. This Xanthomonas campestris pv. campestris (strain 8004) protein is dCTP deaminase.